The following is a 326-amino-acid chain: Pyruvate dehydrogenase E1 component subunit alpha (326 aa).

In terms of assembly, heterodimer of an alpha and a beta chain. The cofactor is thiamine diphosphate.

The enzyme catalyses N(6)-[(R)-lipoyl]-L-lysyl-[protein] + pyruvate + H(+) = N(6)-[(R)-S(8)-acetyldihydrolipoyl]-L-lysyl-[protein] + CO2. Its function is as follows. The pyruvate dehydrogenase complex catalyzes the overall conversion of pyruvate to acetyl-CoA and CO(2). It contains multiple copies of three enzymatic components: pyruvate dehydrogenase (E1), dihydrolipoamide acetyltransferase (E2) and lipoamide dehydrogenase (E3). The sequence is that of Pyruvate dehydrogenase E1 component subunit alpha (pdhA) from Rickettsia typhi (strain ATCC VR-144 / Wilmington).